Here is a 217-residue protein sequence, read N- to C-terminus: tRNA (guanine-N(7)-)-methyltransferase (217 aa).

Residues Glu-43, Asp-68, Asn-101, and Asn-123 each contribute to the S-adenosyl-L-methionine site. Lys-127 contributes to the substrate binding site. Residues 129–134 (RHNKRR) form an interaction with RNA region. Residues Asp-159 and 196 to 199 (TEYE) each bind substrate.

The protein belongs to the class I-like SAM-binding methyltransferase superfamily. TrmB family.

The enzyme catalyses guanosine(46) in tRNA + S-adenosyl-L-methionine = N(7)-methylguanosine(46) in tRNA + S-adenosyl-L-homocysteine. It participates in tRNA modification; N(7)-methylguanine-tRNA biosynthesis. Catalyzes the formation of N(7)-methylguanine at position 46 (m7G46) in tRNA. This Clostridium botulinum (strain Loch Maree / Type A3) protein is tRNA (guanine-N(7)-)-methyltransferase.